Reading from the N-terminus, the 1463-residue chain is Nitric oxide synthase 1 (1463 aa).

Residues 1–200 (MESHMFSVQQ…LQGSGENNKL (200 aa)) are interaction with NOSIP. The region spanning 17-99 (SVRLFKRKVG…ETHVVLILRG (83 aa)) is the PDZ domain. Disordered stretches follow at residues 110 to 194 (TFTG…LQGS), 215 to 250 (GKAI…LPLG), and 268 to 298 (VVLN…SKCP). A DYNLL1/PIN/nNOS-inhibiting protein-binding region spans residues 158 to 240 (PDPGQEASSL…VEVQVDRDPD (83 aa)). Over residues 226–243 (TETKDVEVQVDRDPDSKS) the composition is skewed to basic and acidic residues. Residues 280-294 (PSASGKQSPTKNGSP) are compositionally biased toward polar residues. Ser-334 provides a ligand contact to (6R)-L-erythro-5,6,7,8-tetrahydrobiopterin. Residue Cys-415 coordinates heme b. L-arginine contacts are provided by Gln-478, Trp-587, Tyr-588, and Glu-592. (6R)-L-erythro-5,6,7,8-tetrahydrobiopterin is bound by residues Val-677, Trp-678, and Phe-691. Position 706 (Tyr-706) interacts with heme b. Residues 725–745 (KRRAIGFKKLAEAVKFSAKLM) form a calmodulin-binding region. A Flavodoxin-like domain is found at 755-969 (ATILYATETG…AFRTWAKKVF (215 aa)). FMN is bound by residues Thr-761, Glu-762, Thr-763, Lys-765, Ser-766, Ser-807, Thr-808, and Gly-812. Phosphoserine occurs at positions 881, 891, and 892. FMN is bound by residues Ser-920, His-925, Cys-927, Glu-953, and Gln-957. The region spanning 1024-1271 (KRVSAARLLS…VRGAPSFHLP (248 aa)) is the FAD-binding FR-type domain. An NADP(+)-binding site is contributed by Arg-1044. Positions 1066, 1207, 1208, 1209, 1210, 1225, and 1227 each coordinate FAD. Ser-1230 serves as a coordination point for NADP(+). Tyr-1231, Val-1244, Cys-1245, and Ser-1246 together coordinate FAD. Residues Thr-1285, Arg-1318, Ser-1347, Arg-1348, Lys-1354, Tyr-1356, Gln-1358, Asp-1391, Thr-1432, and Arg-1434 each contribute to the NADP(+) site.

It belongs to the NOS family. Homodimer. Interacts with DLG4; the interaction possibly being prevented by the association between NOS1 and CAPON. Forms a ternary complex with CAPON and RASD1. Forms a ternary complex with CAPON and SYN1. Interacts with ZDHHC23. Interacts with NOSIP; which may impair its synaptic location. Interacts with HTR4. Interacts with SLC6A4. Interacts with VAC14. Interacts (via N-terminal domain) with DLG4 (via N-terminal tandem pair of PDZ domains). Interacts with SLC6A4. Forms a complex with ASL, ASS1 and SLC7A1; the complex regulates cell-autonomous L-arginine synthesis and citrulline recycling while channeling extracellular L-arginine to nitric oxide synthesis pathway. Interacts with DMD; localizes NOS1 to sarcolemma in muscle cells. Interacts with DYNLL1; inhibits the nitric oxide synthase activity. It depends on heme b as a cofactor. The cofactor is FAD. FMN is required as a cofactor. Requires (6R)-L-erythro-5,6,7,8-tetrahydrobiopterin as cofactor. Post-translationally, ubiquitinated; mediated by STUB1/CHIP in the presence of Hsp70 and Hsp40 (in vitro).

It is found in the cell membrane. Its subcellular location is the sarcolemma. The protein localises to the cell projection. The protein resides in the dendritic spine. It carries out the reaction 2 L-arginine + 3 NADPH + 4 O2 + H(+) = 2 L-citrulline + 2 nitric oxide + 3 NADP(+) + 4 H2O. With respect to regulation, stimulated by calcium/calmodulin. Inhibited by DYNLL1 that prevents the dimerization of the protein. Inhibited by NOSIP. Functionally, produces nitric oxide (NO) which is a messenger molecule with diverse functions throughout the body. In the brain and peripheral nervous system, NO displays many properties of a neurotransmitter. Probably has nitrosylase activity and mediates cysteine S-nitrosylation of cytoplasmic target proteins such SRR. The chain is Nitric oxide synthase 1 (NOS1) from Ovis aries (Sheep).